A 473-amino-acid polypeptide reads, in one-letter code: Cysteine--tRNA ligase (473 aa).

Residue Cys28 participates in Zn(2+) binding. A 'HIGH' region motif is present at residues 30–40; it reads PTVYNMPHIGN. Residues Cys213, His238, and Glu242 each contribute to the Zn(2+) site. The short motif at 270–274 is the 'KMSKS' region element; it reads KMSKS. Residue Lys273 coordinates ATP.

It belongs to the class-I aminoacyl-tRNA synthetase family. Zn(2+) is required as a cofactor.

It is found in the cytoplasm. It catalyses the reaction tRNA(Cys) + L-cysteine + ATP = L-cysteinyl-tRNA(Cys) + AMP + diphosphate. The protein is Cysteine--tRNA ligase of Methanosarcina mazei (strain ATCC BAA-159 / DSM 3647 / Goe1 / Go1 / JCM 11833 / OCM 88) (Methanosarcina frisia).